Consider the following 156-residue polypeptide: Cyanate hydratase (156 aa).

Active-site residues include R96, E99, and S122.

It belongs to the cyanase family.

It catalyses the reaction cyanate + hydrogencarbonate + 3 H(+) = NH4(+) + 2 CO2. Its function is as follows. Catalyzes the reaction of cyanate with bicarbonate to produce ammonia and carbon dioxide. The sequence is that of Cyanate hydratase from Pseudomonas putida (strain W619).